A 541-amino-acid chain; its full sequence is Peptide chain release factor 3 (541 aa).

A tr-type G domain is found at 14–283; sequence EARRNFAIIS…AFLDYALKPG (270 aa). Residues 23 to 30, 91 to 95, and 145 to 148 contribute to the GTP site; these read SHPDAGKT, DTPGH, and NKLD.

The protein belongs to the TRAFAC class translation factor GTPase superfamily. Classic translation factor GTPase family. PrfC subfamily.

Its subcellular location is the cytoplasm. Functionally, increases the formation of ribosomal termination complexes and stimulates activities of RF-1 and RF-2. It binds guanine nucleotides and has strong preference for UGA stop codons. It may interact directly with the ribosome. The stimulation of RF-1 and RF-2 is significantly reduced by GTP and GDP, but not by GMP. This is Peptide chain release factor 3 from Acaryochloris marina (strain MBIC 11017).